The chain runs to 462 residues: Aquaporin-1 (462 aa).

The segment covering Met-1–His-11 has biased composition (polar residues). The disordered stretch occupies residues Met-1–Asp-24. At Met-1 to His-146 the chain is on the cytoplasmic side. Residues Ile-147–Gly-167 form a helical membrane-spanning segment. The Extracellular portion of the chain corresponds to Ile-168–Glu-182. A helical membrane pass occupies residues Val-183 to Phe-203. The Cytoplasmic portion of the chain corresponds to Arg-204–Ala-229. Residues Asn-211 to Ala-213 carry the NPA 1 motif. The chain crosses the membrane as a helical span at residues Phe-230 to Ile-250. Residues Phe-251–Gln-269 are Extracellular-facing. A helical membrane pass occupies residues Gly-270 to Val-290. At Glu-291–Thr-296 the chain is on the cytoplasmic side. The chain crosses the membrane as a helical span at residues Phe-297 to Phe-317. At Thr-318–His-341 the chain is on the extracellular side. The short motif at Asn-323–Ala-325 is the NPA 2 element. A helical transmembrane segment spans residues Trp-342–Ile-362. Topologically, residues Lys-363 to Val-462 are cytoplasmic. The tract at residues Gly-407–Arg-433 is disordered. Basic and acidic residues predominate over residues Trp-410–Ser-425.

The protein belongs to the MIP/aquaporin (TC 1.A.8) family.

It is found in the membrane. It catalyses the reaction H2O(in) = H2O(out). Its function is as follows. Water channel required to facilitate the transport of water across membranes. Involved in conidiation. The polypeptide is Aquaporin-1 (Botryotinia fuckeliana (strain B05.10) (Noble rot fungus)).